Consider the following 157-residue polypeptide: Phosphopantetheine adenylyltransferase (157 aa).

Serine 8 provides a ligand contact to substrate. Residues 8–9 (SF) and histidine 16 contribute to the ATP site. Positions 40, 72, and 86 each coordinate substrate. ATP is bound by residues 87 to 89 (GLR), glutamate 97, and 122 to 128 (FSFLSSS).

This sequence belongs to the bacterial CoaD family. As to quaternary structure, homohexamer. Mg(2+) serves as cofactor.

It is found in the cytoplasm. The enzyme catalyses (R)-4'-phosphopantetheine + ATP + H(+) = 3'-dephospho-CoA + diphosphate. It functions in the pathway cofactor biosynthesis; coenzyme A biosynthesis; CoA from (R)-pantothenate: step 4/5. Its function is as follows. Reversibly transfers an adenylyl group from ATP to 4'-phosphopantetheine, yielding dephospho-CoA (dPCoA) and pyrophosphate. This Prochlorococcus marinus (strain MIT 9211) protein is Phosphopantetheine adenylyltransferase.